Here is a 94-residue protein sequence, read N- to C-terminus: Large ribosomal subunit protein eL37 (94 aa).

C19, C22, C34, and C37 together coordinate Zn(2+). Residues 19-37 (CRRCGKATYHKQKLRCAAC) form a C4-type zinc finger.

The protein belongs to the eukaryotic ribosomal protein eL37 family. The cofactor is Zn(2+).

It localises to the cytoplasm. Binds to the 23S rRNA. This Tetrahymena thermophila (strain SB210) protein is Large ribosomal subunit protein eL37 (RPL37).